Here is a 490-residue protein sequence, read N- to C-terminus: MESMIRIILLSLIIFITILFFIKQKKGKKSNTPASPPRLPLIGNLHQLGRHPHRSLCSLSNRYGPLMLLRFGLVPVLVVSSADVARDILKTYDRVFASRPRSKIFEKIFYEARDVALAPYGEYWRQMKSVCVLHLLTNKMVRSFRNVRQEEISLMMEKIQKSSSLQVNLSELLGSLTNDVISRVALGRKYSDETDFKELMKRLTKLLGEFCVGTYVPWLAWIDWISGLDGQLKKTGNDLDEFLEKVVQDHEDGDAQRTDFVDVLLRIQREKSVGFEIDRLSIKAIILDVVVGGTDTSYALMEWAMTELLHRPECLNRLQEEVRTICKGNSSVSEDDIKDMNYLKAVIKETMRLHPPLPLMVPHESTQDVRLGDYHIPAGTQVMINAWAIGREAATWGPDAEKFRPERHLNSSVDFRGHNFELIPFGAGRRICPAISFAVILIEVTLANLVHRYDWRLPEEYIEDQTNVAESTGMVIHRLFPLYAIVSSTT.

The helical transmembrane segment at 2 to 22 (ESMIRIILLSLIIFITILFFI) threads the bilayer. Cysteine 432 is a heme binding site.

It belongs to the cytochrome P450 family. Requires heme as cofactor.

Its subcellular location is the membrane. In Arabidopsis thaliana (Mouse-ear cress), this protein is Cytochrome P450 71A22 (CYP71A22).